Consider the following 383-residue polypeptide: Soluble hydrogenase 42 kDa subunit (383 aa).

Residue Lys-194 is modified to N6-(pyridoxal phosphate)lysine.

This sequence belongs to the class-V pyridoxal-phosphate-dependent aminotransferase family. In terms of assembly, heterodimer of a large and a small subunit. Pyridoxal 5'-phosphate is required as a cofactor.

Its subcellular location is the cytoplasm. Soluble hydrogenase catalyzes both production and consumption of hydrogen from suitable artificial electron donors or acceptors. This subunit catalyzes the tritium-exchange activity. This is Soluble hydrogenase 42 kDa subunit from Anabaena cylindrica.